The primary structure comprises 216 residues: Protein YabP (216 aa).

In Escherichia coli (strain K12), this protein is Protein YabP (yabP).